The following is a 91-amino-acid chain: Probable Fe(2+)-trafficking protein (91 aa).

The protein belongs to the Fe(2+)-trafficking protein family.

In terms of biological role, could be a mediator in iron transactions between iron acquisition and iron-requiring processes, such as synthesis and/or repair of Fe-S clusters in biosynthetic enzymes. The sequence is that of Probable Fe(2+)-trafficking protein from Cellvibrio japonicus (strain Ueda107) (Pseudomonas fluorescens subsp. cellulosa).